The chain runs to 332 residues: 3-ketodihydrosphingosine reductase (332 aa).

The first 25 residues, 1–25 (MLLLAAASLVAFVLLLYMVSPLISP), serve as a signal peptide directing secretion. At 26–269 (KPLALPGAHV…QGNFNSSIGS (244 aa)) the chain is on the cytoplasmic side. NADPH-binding residues include Gly39, Ser41, Ser42, Gly43, Arg64, Lys68, and Asp93. The GXSXG signature appears at 39–43 (GGSSG). The Proton donor role is filled by Ser172. Tyr186 functions as the Proton acceptor in the catalytic mechanism. Residues Tyr186 and Lys190 each contribute to the NADP(+) site. The active-site Lowers pKa of active site Tyr is the Lys190. Residues 270 to 290 (DGYMLSSLTCGMAPVTSIMEG) form a helical membrane-spanning segment. Topologically, residues 291-292 (LQ) are lumenal. The helical transmembrane segment at 293–313 (QVVTMGLFRTIALFYLGSFDS) threads the bilayer. The Cytoplasmic segment spans residues 314–331 (IVRRCMMQKAKLETVDKT).

The protein belongs to the short-chain dehydrogenases/reductases (SDR) family.

It localises to the endoplasmic reticulum membrane. The enzyme catalyses sphinganine + NADP(+) = 3-oxosphinganine + NADPH + H(+). Its pathway is lipid metabolism; sphingolipid metabolism. Catalyzes the reduction of 3'-oxosphinganine (3-ketodihydrosphingosine/KDS) to sphinganine (dihydrosphingosine/DHS), the second step of de novo sphingolipid biosynthesis. This Bos taurus (Bovine) protein is 3-ketodihydrosphingosine reductase (KDSR).